The primary structure comprises 101 residues: MEPVDPSLEPWKHPGSQPKTACTNCYCKKCCLHCQVCFTTKGLGISYGRKKRRQRRRPPQDSQTHQVSLPKQPSSQQRGDPTGPKESKKKVERETETDPDN.

A disordered region spans residues 1–20; it reads MEPVDPSLEPWKHPGSQPKT. The interval 1–24 is interaction with human CREBBP; sequence MEPVDPSLEPWKHPGSQPKTACTN. The tract at residues 1–48 is transactivation; sequence MEPVDPSLEPWKHPGSQPKTACTNCYCKKCCLHCQVCFTTKGLGISYG. Zn(2+) contacts are provided by Cys22, Cys25, and Cys27. The tract at residues 22 to 37 is cysteine-rich; the sequence is CTNCYCKKCCLHCQVC. Lys28 carries the post-translational modification N6-acetyllysine; by host PCAF. Zn(2+)-binding residues include Cys30, His33, Cys34, and Cys37. Residues 38–48 are core; that stretch reads FTTKGLGISYG. Residues 45–101 form a disordered region; the sequence is ISYGRKKRRQRRRPPQDSQTHQVSLPKQPSSQQRGDPTGPKESKKKVERETETDPDN. Residues 48–57 show a composition bias toward basic residues; sequence GRKKRRQRRR. Positions 49 to 57 match the Nuclear localization signal, RNA-binding (TAR), and protein transduction motif; it reads RKKRRQRRR. Residues 49–86 are interaction with the host capping enzyme RNGTT; sequence RKKRRQRRRPPQDSQTHQVSLPKQPSSQQRGDPTGPKE. Residues Lys50 and Lys51 each carry the N6-acetyllysine; by host EP300 and GCN5L2 modification. An asymmetric dimethylarginine; by host PRMT6 mark is found at Arg52 and Arg53. Residues 61–79 are compositionally biased toward polar residues; that stretch reads DSQTHQVSLPKQPSSQQRG. Residue Lys71 forms a Glycyl lysine isopeptide (Lys-Gly) (interchain with G-Cter in ubiquitin) linkage. Positions 78-80 match the Cell attachment site motif; that stretch reads RGD. The span at 83–101 shows a compositional bias: basic and acidic residues; sequence GPKESKKKVERETETDPDN.

This sequence belongs to the lentiviruses Tat family. In terms of assembly, interacts with host CCNT1. Associates with the P-TEFb complex composed at least of Tat, P-TEFb (CDK9 and CCNT1), TAR RNA, RNA Pol II. Recruits the HATs CREBBP, TAF1/TFIID, EP300, PCAF and GCN5L2. Interacts with host KAT5/Tip60; this interaction targets the latter to degradation. Interacts with the host deacetylase SIRT1. Interacts with host capping enzyme RNGTT; this interaction stimulates RNGTT. Binds to host KDR, and to the host integrins ITGAV/ITGB3 and ITGA5/ITGB1. Interacts with host KPNB1/importin beta-1 without previous binding to KPNA1/importin alpha-1. Interacts with EIF2AK2. Interacts with host nucleosome assembly protein NAP1L1; this interaction may be required for the transport of Tat within the nucleus, since the two proteins interact at the nuclear rim. Interacts with host C1QBP/SF2P32; this interaction involves lysine-acetylated Tat. Interacts with the host chemokine receptors CCR2, CCR3 and CXCR4. Interacts with host DPP4/CD26; this interaction may trigger an anti-proliferative effect. Interacts with host LDLR. Interacts with the host extracellular matrix metalloproteinase MMP1. Interacts with host PRMT6; this interaction mediates Tat's methylation. Interacts with, and is ubiquitinated by MDM2/Hdm2. Interacts with host PSMC3 and HTATIP2. Interacts with STAB1; this interaction may overcome SATB1-mediated repression of IL2 and IL2RA (interleukin) in T cells by binding to the same domain than HDAC1. Interacts (when acetylated) with human CDK13, thereby increasing HIV-1 mRNA splicing and promoting the production of the doubly spliced HIV-1 protein Nef. Interacts with host TBP; this interaction modulates the activity of transcriptional pre-initiation complex. Interacts with host RELA. Interacts with host PLSCR1; this interaction negatively regulates Tat transactivation activity by altering its subcellular distribution. Post-translationally, asymmetrical arginine methylation by host PRMT6 seems to diminish the transactivation capacity of Tat and affects the interaction with host CCNT1. Acetylation by EP300, CREBBP, GCN5L2/GCN5 and PCAF regulates the transactivation activity of Tat. EP300-mediated acetylation of Lys-50 promotes dissociation of Tat from the TAR RNA through the competitive binding to PCAF's bromodomain. In addition, the non-acetylated Tat's N-terminus can also interact with PCAF. PCAF-mediated acetylation of Lys-28 enhances Tat's binding to CCNT1. Lys-50 is deacetylated by SIRT1. In terms of processing, polyubiquitination by host MDM2 does not target Tat to degradation, but activates its transactivation function and fosters interaction with CCNT1 and TAR RNA. Post-translationally, phosphorylated by EIF2AK2 on serine and threonine residues adjacent to the basic region important for TAR RNA binding and function. Phosphorylation of Tat by EIF2AK2 is dependent on the prior activation of EIF2AK2 by dsRNA.

Its subcellular location is the host nucleus. The protein resides in the host nucleolus. It localises to the host cytoplasm. It is found in the secreted. Functionally, transcriptional activator that increases RNA Pol II processivity, thereby increasing the level of full-length viral transcripts. Recognizes a hairpin structure at the 5'-LTR of the nascent viral mRNAs referred to as the transactivation responsive RNA element (TAR) and recruits the cyclin T1-CDK9 complex (P-TEFb complex) that will in turn hyperphosphorylate the RNA polymerase II to allow efficient elongation. The CDK9 component of P-TEFb and other Tat-activated kinases hyperphosphorylate the C-terminus of RNA Pol II that becomes stabilized and much more processive. Other factors such as HTATSF1/Tat-SF1, SUPT5H/SPT5, and HTATIP2 are also important for Tat's function. Besides its effect on RNA Pol II processivity, Tat induces chromatin remodeling of proviral genes by recruiting the histone acetyltransferases (HATs) CREBBP, EP300 and PCAF to the chromatin. This also contributes to the increase in proviral transcription rate, especially when the provirus integrates in transcriptionally silent region of the host genome. To ensure maximal activation of the LTR, Tat mediates nuclear translocation of NF-kappa-B by interacting with host RELA. Through its interaction with host TBP, Tat may also modulate transcription initiation. Tat can reactivate a latently infected cell by penetrating in it and transactivating its LTR promoter. In the cytoplasm, Tat is thought to act as a translational activator of HIV-1 mRNAs. In terms of biological role, extracellular circulating Tat can be endocytosed by surrounding uninfected cells via the binding to several surface receptors such as CD26, CXCR4, heparan sulfate proteoglycans (HSPG) or LDLR. Neurons are rarely infected, but they internalize Tat via their LDLR. Through its interaction with nuclear HATs, Tat is potentially able to control the acetylation-dependent cellular gene expression. Modulates the expression of many cellular genes involved in cell survival, proliferation or in coding for cytokines or cytokine receptors. Tat plays a role in T-cell and neurons apoptosis. Tat induced neurotoxicity and apoptosis probably contribute to neuroAIDS. Circulating Tat also acts as a chemokine-like and/or growth factor-like molecule that binds to specific receptors on the surface of the cells, affecting many cellular pathways. In the vascular system, Tat binds to ITGAV/ITGB3 and ITGA5/ITGB1 integrins dimers at the surface of endothelial cells and competes with bFGF for heparin-binding sites, leading to an excess of soluble bFGF. This is Protein Tat from Homo sapiens (Human).